The sequence spans 199 residues: Glycerol-3-phosphate acyltransferase (199 aa).

Helical transmembrane passes span 3–23, 55–75, 79–99, 113–133, and 155–175; these read IKIL…AYIV, VITL…ATFI, FSYS…TIFL, VFFA…GLAF, and YFLG…LLII.

Belongs to the PlsY family. Probably interacts with PlsX.

Its subcellular location is the cell inner membrane. It carries out the reaction an acyl phosphate + sn-glycerol 3-phosphate = a 1-acyl-sn-glycero-3-phosphate + phosphate. The protein operates within lipid metabolism; phospholipid metabolism. Functionally, catalyzes the transfer of an acyl group from acyl-phosphate (acyl-PO(4)) to glycerol-3-phosphate (G3P) to form lysophosphatidic acid (LPA). This enzyme utilizes acyl-phosphate as fatty acyl donor, but not acyl-CoA or acyl-ACP. The protein is Glycerol-3-phosphate acyltransferase of Endomicrobium trichonymphae.